The chain runs to 395 residues: Probable alcohol dehydrogenase EutG (395 aa).

NAD(+) contacts are provided by residues Asp57, Gly116 to Asp120, Thr156 to Thr160, Lys178, and Leu197 to Val201. Fe cation contacts are provided by Asp212, His216, His281, and His295. NAD(+)-binding residues include His295 and Asp354.

It belongs to the iron-containing alcohol dehydrogenase family. Requires Fe cation as cofactor.

The protein resides in the bacterial microcompartment. The enzyme catalyses ethanol + NAD(+) = acetaldehyde + NADH + H(+). The protein operates within amine and polyamine degradation; ethanolamine degradation. May act on the acetaldehyde produced from the degradation of ethanolamine, producing ethanol. Active on acetaldehyde and isobutyraldehyde in vitro. In vitro works equally well with NADH or NADPH. The protein is Probable alcohol dehydrogenase EutG (eutG) of Escherichia coli (strain K12).